The sequence spans 1089 residues: WD repeat-containing protein on Y chromosome (1089 aa).

7 WD repeats span residues 155–199, 207–249, 329–368, 372–411, 462–501, 514–553, and 601–641; these read EEVA…IRTA, PHAV…RGPF, RIPL…EPSA, GHNG…LLQT, THAA…RKII, TIDI…VIRN, and FHTD…RRYS. Residues 661 to 684 are disordered; it reads KRSKRWASRAPHSGSHMMSHTGSH. A compositionally biased stretch (low complexity) spans 672-684; sequence HSGSHMMSHTGSH. WD repeat units follow at residues 767–806 and 850–889; these read KTGD…IPEA and GHLK…LGTL. A disordered region spans residues 1049-1089; the sequence is LNIKLPSRRRSDRTNDPRNMRTAKTRGDMGLGHRSSHTSQN.

This Drosophila willistoni (Fruit fly) protein is WD repeat-containing protein on Y chromosome.